The following is a 162-amino-acid chain: Peptide deformylase (162 aa).

2 residues coordinate Fe cation: Cys-86 and His-128. Residue Glu-129 is part of the active site. Fe cation is bound at residue His-132.

This sequence belongs to the polypeptide deformylase family. The cofactor is Fe(2+).

The enzyme catalyses N-terminal N-formyl-L-methionyl-[peptide] + H2O = N-terminal L-methionyl-[peptide] + formate. Its function is as follows. Removes the formyl group from the N-terminal Met of newly synthesized proteins. Requires at least a dipeptide for an efficient rate of reaction. N-terminal L-methionine is a prerequisite for activity but the enzyme has broad specificity at other positions. The protein is Peptide deformylase of Treponema pallidum (strain Nichols).